The following is a 491-amino-acid chain: Cadherin-3 (491 aa).

3 Cadherin domains span residues 1-102 (ENTV…PPVF), 103-208 (VPPS…DHGP), and 209-314 (VPEP…DPWT). The Extracellular segment spans residues 1 to 316 (ENTVSHEVQR…VTCRDPWTWG (316 aa)). An N-linked (GlcNAc...) asparagine glycan is attached at Asn-228. Residues 317 to 339 (FLLPILGAALALLLLLLVLLFLV) form a helical membrane-spanning segment. The Cytoplasmic segment spans residues 340 to 491 (RKKRKIKEPL…ADMYGGGQDD (152 aa)).

As to quaternary structure, interacts with CDCP1 and CTNNB1.

It is found in the cell membrane. Cadherins are calcium-dependent cell adhesion proteins. They preferentially interact with themselves in a homophilic manner in connecting cells; cadherins may thus contribute to the sorting of heterogeneous cell types. The polypeptide is Cadherin-3 (CDH3) (Bos taurus (Bovine)).